We begin with the raw amino-acid sequence, 556 residues long: MASRRVLSSLLRSSSGRSAAKLGNRNPRLPSPSPARHAAPCSYLLGRVAEYATSSPASSAAPSSAPAKDEGKKTYDYGGKGAIGRVCQVIGAIVDVRFEDQEGLPPIMTSLEVQDHPTRLVLEVSHHLGQNVVRTIAMDGTEGLVRGRKVLNTGAPITVPVGRATLGRIMNVLGEPIDERGEIKTEHYLPIHRDAPALVDLATGQEILATGIKVVDLLAPYQRGGKIGLFGGAGVGKTVLIMELINNVAKAHGGFSVFAGVGERTREGNDLYREMIESGVIKLGEKQSESKCALVYGQMNEPPGARARVGLTGLTVAEYFRDAEGQDVLLFIDNIFRFTQANSEVSALLGRIPSAVGYQPTLASDLGALQERITTTKKGSITSVQAIYVPADDLTDPAPATTFAHLDATTVLSRQISELGIYPAVDPLDSTSRMLSPHILGEEHYNTARGVQKVLQNYKNLQDIIAILGMDELSEDDKLTVARARKIQRFLSQPFHVAEIFTGAPGKYVDLKENINSFQGLLDGKYDDLSEQSFYMVGGIDEVVAKAEKIAKESAA.

Residues Met1–Ala20 are compositionally biased toward low complexity. The segment at Met1–His37 is disordered. A mitochondrion-targeting transit peptide spans Met1–Tyr51. Ser59 carries the phosphoserine modification. Gly231–Thr238 is a binding site for ATP.

It belongs to the ATPase alpha/beta chains family. In terms of assembly, F-type ATPases have 2 components, CF(1) - the catalytic core - and CF(0) - the membrane proton channel. CF(1) has five subunits: alpha(3), beta(3), gamma(1), delta(1), epsilon(1). CF(0) has three main subunits: a, b and c.

The protein localises to the mitochondrion. It is found in the mitochondrion inner membrane. It catalyses the reaction ATP + H2O + 4 H(+)(in) = ADP + phosphate + 5 H(+)(out). Mitochondrial membrane ATP synthase (F(1)F(0) ATP synthase or Complex V) produces ATP from ADP in the presence of a proton gradient across the membrane which is generated by electron transport complexes of the respiratory chain. F-type ATPases consist of two structural domains, F(1) - containing the extramembraneous catalytic core, and F(0) - containing the membrane proton channel, linked together by a central stalk and a peripheral stalk. During catalysis, ATP synthesis in the catalytic domain of F(1) is coupled via a rotary mechanism of the central stalk subunits to proton translocation. Subunits alpha and beta form the catalytic core in F(1). Rotation of the central stalk against the surrounding alpha(3)beta(3) subunits leads to hydrolysis of ATP in three separate catalytic sites on the beta subunits. The chain is ATP synthase subunit beta-1, mitochondrial from Arabidopsis thaliana (Mouse-ear cress).